Consider the following 602-residue polypeptide: CDPK-related protein kinase (602 aa).

A disordered region spans residues Met1–Pro59. Positions Thr19–Ser34 are enriched in polar residues. 3 repeat units span residues Ser20 to Thr26, Ser27 to Asn33, and Ser34 to Ile40. The 3 X 7 AA tandem repeats of S-[LI]-P-X-X-D-X stretch occupies residues Ser20 to Ile40. A Protein kinase domain is found at Phe148–Ile410. ATP-binding positions include Val154–Thr162 and Lys180. The active-site Proton acceptor is Asp276. 4 EF-hand domains span residues Val451–Thr486, Asp487–Leu527, Asp528–Ser563, and Ile564–Gln602.

It belongs to the protein kinase superfamily. CAMK Ser/Thr protein kinase family. CaMK subfamily.

It catalyses the reaction L-seryl-[protein] + ATP = O-phospho-L-seryl-[protein] + ADP + H(+). The catalysed reaction is L-threonyl-[protein] + ATP = O-phospho-L-threonyl-[protein] + ADP + H(+). The protein is CDPK-related protein kinase (CRK) of Daucus carota (Wild carrot).